Consider the following 245-residue polypeptide: Spore membrane assembly protein 1 (245 aa).

Functionally, involved in spore and ascus formation. Required for the efficient assembly of the precursors of the prospore membrane to a continuous prospore membrane. The protein is Spore membrane assembly protein 1 (SMA1) of Saccharomyces cerevisiae (strain ATCC 204508 / S288c) (Baker's yeast).